Consider the following 149-residue polypeptide: Down syndrome critical region protein 9 (149 aa).

The disordered stretch occupies residues 1 to 41; that stretch reads MGRICPVNSRARRLRARPGRPSGDSLPYHQLQGGAPRLWSP.

The sequence is that of Down syndrome critical region protein 9 (DSCR9) from Pan troglodytes (Chimpanzee).